A 173-amino-acid chain; its full sequence is Sialic acid TRAP transporter small permease protein SiaQ (173 aa).

The next 4 helical transmembrane spans lie at 13–33 (IEEIITVPLMAALLAVLTWQI), 46–66 (SEELARLLFMYMCLVGCAIAI), 87–107 (LSLVLSLEIAVLVSIGAIIVL), and 123–143 (LGISSSWMNYSLPVGGVFMVF).

This sequence belongs to the TRAP transporter small permease family. As to quaternary structure, the complex comprises the extracytoplasmic solute receptor protein SiaP, and the two transmembrane proteins SiaQ and SiaM. SiaQ and SiaM form a tight 1:1 complex.

It localises to the cell inner membrane. Its function is as follows. Part of the tripartite ATP-independent periplasmic (TRAP) transport system SiaPQM that catalyzes unidirectional Na(+)-dependent sialic acid uptake. This chain is Sialic acid TRAP transporter small permease protein SiaQ, found in Vibrio cholerae serotype O1 (strain ATCC 39315 / El Tor Inaba N16961).